A 238-amino-acid chain; its full sequence is Phosphoribosylaminoimidazole-succinocarboxamide synthase (238 aa).

It belongs to the SAICAR synthetase family.

It carries out the reaction 5-amino-1-(5-phospho-D-ribosyl)imidazole-4-carboxylate + L-aspartate + ATP = (2S)-2-[5-amino-1-(5-phospho-beta-D-ribosyl)imidazole-4-carboxamido]succinate + ADP + phosphate + 2 H(+). Its pathway is purine metabolism; IMP biosynthesis via de novo pathway; 5-amino-1-(5-phospho-D-ribosyl)imidazole-4-carboxamide from 5-amino-1-(5-phospho-D-ribosyl)imidazole-4-carboxylate: step 1/2. The polypeptide is Phosphoribosylaminoimidazole-succinocarboxamide synthase (Chlorobium phaeovibrioides (strain DSM 265 / 1930) (Prosthecochloris vibrioformis (strain DSM 265))).